The chain runs to 67 residues: Probable Sec-independent protein translocase protein TatE (67 aa).

Residues 4 to 21 (ISITKLLVIAALVVLLFG) traverse the membrane as a helical segment. The segment at 44-67 (NDDDTGAKTPAASEAPAERLSHKE) is disordered.

Belongs to the TatA/E family. TatE subfamily.

The protein localises to the cell inner membrane. Functionally, part of the twin-arginine translocation (Tat) system that transports large folded proteins containing a characteristic twin-arginine motif in their signal peptide across membranes. TatE shares overlapping functions with TatA. The protein is Probable Sec-independent protein translocase protein TatE of Cronobacter sakazakii (strain ATCC BAA-894) (Enterobacter sakazakii).